The sequence spans 395 residues: Nucleoside diphosphate kinase homolog 7 (395 aa).

A DM10 domain is found at 22 to 110 (QSERFAFIAE…YTARQLGSRK (89 aa)).

Belongs to the NDK family. In terms of assembly, component of sperm flagellar doublet microtubules. Component of the gamma-tubulin ring complex. In terms of tissue distribution, widely expressed. Expressed in the flagellum of epididymal sperm but not in testicular sperm (at protein level).

It is found in the cytoplasm. The protein localises to the cytoskeleton. Its subcellular location is the microtubule organizing center. The protein resides in the centrosome. It localises to the nucleus. It is found in the spindle. The protein localises to the cilium axoneme. Its subcellular location is the flagellum axoneme. The protein resides in the cell projection. It localises to the cilium. Possesses an intrinsic kinase activity. Displays 3'-5' exonuclease activity with a preference for single-stranded DNA. Does not seem to have nucleoside diphosphate kinase activity. Functional component of the gamma-tubulin ring complex, implicated in the regulation of the microtubule-nucleating activity of the gamma-tubulin ring complex in centrosomes, in a kinase activity-dependent manner. Part of the dynein-decorated doublet microtubules (DMTs) in cilia axoneme, which is required for motile cilia beating. The polypeptide is Nucleoside diphosphate kinase homolog 7 (Nme7) (Rattus norvegicus (Rat)).